Reading from the N-terminus, the 216-residue chain is uncharacterized protein (216 aa).

The chain crosses the membrane as a helical span at residues 7-29 (ILVIFFLIFFIGFEFSDMTLAFI).

It localises to the membrane. This is an uncharacterized protein from Archaeoglobus fulgidus (strain ATCC 49558 / DSM 4304 / JCM 9628 / NBRC 100126 / VC-16).